A 149-amino-acid polypeptide reads, in one-letter code: Large ribosomal subunit protein uL13 (149 aa).

Belongs to the universal ribosomal protein uL13 family. As to quaternary structure, part of the 50S ribosomal subunit.

Functionally, this protein is one of the early assembly proteins of the 50S ribosomal subunit, although it is not seen to bind rRNA by itself. It is important during the early stages of 50S assembly. This chain is Large ribosomal subunit protein uL13, found in Borrelia turicatae (strain 91E135).